The following is a 178-amino-acid chain: Large ribosomal subunit protein uL6 (178 aa).

It belongs to the universal ribosomal protein uL6 family. As to quaternary structure, part of the 50S ribosomal subunit.

Functionally, this protein binds to the 23S rRNA, and is important in its secondary structure. It is located near the subunit interface in the base of the L7/L12 stalk, and near the tRNA binding site of the peptidyltransferase center. The sequence is that of Large ribosomal subunit protein uL6 from Streptococcus thermophilus (strain CNRZ 1066).